The primary structure comprises 213 residues: Uracil phosphoribosyltransferase (213 aa).

5-phospho-alpha-D-ribose 1-diphosphate-binding positions include arginine 78, arginine 103, and 130 to 138; that span reads DPMLATGGS. Uracil is bound by residues isoleucine 193 and 198 to 200; that span reads GDA. Residue aspartate 199 participates in 5-phospho-alpha-D-ribose 1-diphosphate binding.

This sequence belongs to the UPRTase family. Mg(2+) is required as a cofactor.

The enzyme catalyses UMP + diphosphate = 5-phospho-alpha-D-ribose 1-diphosphate + uracil. The protein operates within pyrimidine metabolism; UMP biosynthesis via salvage pathway; UMP from uracil: step 1/1. Its activity is regulated as follows. Allosterically activated by GTP. Functionally, catalyzes the conversion of uracil and 5-phospho-alpha-D-ribose 1-diphosphate (PRPP) to UMP and diphosphate. The chain is Uracil phosphoribosyltransferase from Bordetella pertussis (strain Tohama I / ATCC BAA-589 / NCTC 13251).